The following is a 296-amino-acid chain: Elongation factor Ts (296 aa).

The segment at 82–85 is involved in Mg(2+) ion dislocation from EF-Tu; sequence TDFV.

The protein belongs to the EF-Ts family.

It localises to the cytoplasm. Associates with the EF-Tu.GDP complex and induces the exchange of GDP to GTP. It remains bound to the aminoacyl-tRNA.EF-Tu.GTP complex up to the GTP hydrolysis stage on the ribosome. The sequence is that of Elongation factor Ts from Coxiella burnetii (strain CbuG_Q212) (Coxiella burnetii (strain Q212)).